The following is a 376-amino-acid chain: Chorismate synthase (376 aa).

NADP(+)-binding residues include Arg39 and Arg45. Residues 115–117 (RSS), Gly276, 291–295 (KPIPT), and Arg317 contribute to the FMN site.

This sequence belongs to the chorismate synthase family. Homotetramer. FMNH2 serves as cofactor.

The catalysed reaction is 5-O-(1-carboxyvinyl)-3-phosphoshikimate = chorismate + phosphate. Its pathway is metabolic intermediate biosynthesis; chorismate biosynthesis; chorismate from D-erythrose 4-phosphate and phosphoenolpyruvate: step 7/7. Catalyzes the anti-1,4-elimination of the C-3 phosphate and the C-6 proR hydrogen from 5-enolpyruvylshikimate-3-phosphate (EPSP) to yield chorismate, which is the branch point compound that serves as the starting substrate for the three terminal pathways of aromatic amino acid biosynthesis. This reaction introduces a second double bond into the aromatic ring system. The protein is Chorismate synthase of Thermotoga maritima (strain ATCC 43589 / DSM 3109 / JCM 10099 / NBRC 100826 / MSB8).